A 502-amino-acid polypeptide reads, in one-letter code: Glycogen synthase 1 (502 aa).

Lysine 18 provides a ligand contact to ADP-alpha-D-glucose.

Belongs to the glycosyltransferase 1 family. Bacterial/plant glycogen synthase subfamily.

It catalyses the reaction [(1-&gt;4)-alpha-D-glucosyl](n) + ADP-alpha-D-glucose = [(1-&gt;4)-alpha-D-glucosyl](n+1) + ADP + H(+). The protein operates within glycan biosynthesis; glycogen biosynthesis. Synthesizes alpha-1,4-glucan chains using ADP-glucose. The polypeptide is Glycogen synthase 1 (Geobacter metallireducens (strain ATCC 53774 / DSM 7210 / GS-15)).